A 368-amino-acid chain; its full sequence is Heme A synthase (368 aa).

A run of 5 helical transmembrane segments spans residues 14-34, 104-124, 129-149, 161-181, and 200-220; these read AVRIWLTLVAALIAVMVLVGG, VIGIVYLLPFLWFLWRGAIGP, ALWIIFALGALQGAVGWWMVA, VRLATHLSLALIIYAAIVWTL, and ALALLGLTFVQLYAGALVAGL. His-264 contributes to the heme binding site. The next 3 membrane-spanning stretches (helical) occupy residues 266-283, 296-316, and 318-338; these read MLAYALWTLAALHMIDAL, FLALTAQATLGIFTVLYAAPI, and LALVHQAMALVVLTLAVLQAE. A heme-binding site is contributed by His-322.

The protein belongs to the COX15/CtaA family. Type 2 subfamily. Interacts with CtaB. Heme b serves as cofactor.

It localises to the cell membrane. It catalyses the reaction Fe(II)-heme o + 2 A + H2O = Fe(II)-heme a + 2 AH2. It functions in the pathway porphyrin-containing compound metabolism; heme A biosynthesis; heme A from heme O: step 1/1. Catalyzes the conversion of heme O to heme A by two successive hydroxylations of the methyl group at C8. The first hydroxylation forms heme I, the second hydroxylation results in an unstable dihydroxymethyl group, which spontaneously dehydrates, resulting in the formyl group of heme A. In Rhodopseudomonas palustris (strain ATCC BAA-98 / CGA009), this protein is Heme A synthase.